A 400-amino-acid chain; its full sequence is Acetate kinase (400 aa).

Asn7 is a Mg(2+) binding site. ATP is bound at residue Lys14. Arg92 is a binding site for substrate. Catalysis depends on Asp149, which acts as the Proton donor/acceptor. Residues 209 to 213 (HLGNG), 283 to 285 (DAR), and 331 to 335 (GMGEN) contribute to the ATP site. Residue Glu385 participates in Mg(2+) binding.

The protein belongs to the acetokinase family. In terms of assembly, homodimer. Mg(2+) serves as cofactor. Mn(2+) is required as a cofactor.

The protein resides in the cytoplasm. The catalysed reaction is acetate + ATP = acetyl phosphate + ADP. It participates in metabolic intermediate biosynthesis; acetyl-CoA biosynthesis; acetyl-CoA from acetate: step 1/2. In terms of biological role, catalyzes the formation of acetyl phosphate from acetate and ATP. Can also catalyze the reverse reaction. The polypeptide is Acetate kinase (Helicobacter acinonychis (strain Sheeba)).